We begin with the raw amino-acid sequence, 203 residues long: Endo-type membrane-bound lytic murein transglycosylase A (203 aa).

The first 15 residues, 1 to 15 (MKLRWFAFLMVLLAG), serve as a signal peptide directing secretion. Cysteine 16 is lipidated: N-palmitoyl cysteine. Residue cysteine 16 is the site of S-diacylglycerol cysteine attachment.

It belongs to the transglycosylase Slt family.

It is found in the cell outer membrane. The catalysed reaction is Endolytic cleavage of the (1-&gt;4)-beta-glycosidic linkage between N-acetylmuramic acid (MurNAc) and N-acetylglucosamine (GlcNAc) residues in peptidoglycan with concomitant formation of a 1,6-anhydrobond in the MurNAc residue.. Its function is as follows. Murein-degrading enzyme. May play a role in recycling of muropeptides during cell elongation and/or cell division. Preferentially cleaves at a distance of more than two disaccharide units from the ends of the glycan chain. The protein is Endo-type membrane-bound lytic murein transglycosylase A of Enterobacter sp. (strain 638).